Here is a 357-residue protein sequence, read N- to C-terminus: mRNA endoribonuclease toxin LS (357 aa).

Forms homodimer in solution. Forms a complex with cognate antitoxin RnlB and with enterobacteria phage T4 antitoxin Dmd.

The protein localises to the cytoplasm. Functionally, toxic component of a type II toxin-antitoxin (TA) system. A stable (half-life 27.6 minutes) endoribonuclease that in the absence of cognate antitoxin RnlB causes generalized RNA degradation. Degrades late enterobacteria phage T4 mRNAs, protecting the host against T4 reproduction. Activity is inhibited by cognate antitoxin RnlB and by enterobacteria phage T4 protein Dmd. Targets cyaA mRNA. This is mRNA endoribonuclease toxin LS (rnlA) from Escherichia coli (strain K12).